A 423-amino-acid chain; its full sequence is AP-1 complex subunit mu-2 (423 aa).

In terms of domain architecture, MHD spans 168 to 421 (KNEVFIDVIE…ITQSGDYQLR (254 aa)).

Belongs to the adaptor complexes medium subunit family. Adaptor protein complex 1 (AP-1) is a heterotetramer composed of two large adaptins (gamma-type subunit AP1G1 and beta-type subunit AP1B1), a medium adaptin (mu-type subunit AP1M1 or AP1M2) and a small adaptin (sigma-type subunit AP1S1 or AP1S2 or AP1S3). Interacts with P2X4. Phosphorylation of membrane-bound AP1M1/AP1M2 increases its affinity for sorting signals.

It is found in the cytoplasmic vesicle. The protein localises to the clathrin-coated vesicle membrane. It localises to the golgi apparatus. In terms of biological role, subunit of clathrin-associated adaptor protein complex 1 that plays a role in protein sorting in the trans-Golgi network (TGN) and endosomes. The AP complexes mediate the recruitment of clathrin to membranes and the recognition of sorting signals within the cytosolic tails of transmembrane cargo molecules. The sequence is that of AP-1 complex subunit mu-2 from Bos taurus (Bovine).